Consider the following 291-residue polypeptide: Oxidative stress-responsive serine-rich protein 1 (291 aa).

The disordered stretch occupies residues 48 to 174; it reads EDAKPKSACA…SSDAPQVSQA (127 aa). Positions 65 to 83 are enriched in basic residues; the sequence is STRKSSRGAVRTQRRRRSK. The span at 132 to 142 shows a compositional bias: polar residues; the sequence is ECSSSLDTNHT. Phosphothreonine occurs at positions 142 and 232.

In Bos taurus (Bovine), this protein is Oxidative stress-responsive serine-rich protein 1 (OSER1).